A 503-amino-acid polypeptide reads, in one-letter code: Aromatase (503 aa).

3 helical membrane passes run 19–39, 51–71, and 303–323; these read EVAP…LLVW, GYFL…MGIG, and MLIA…FLIA. The substrate site is built by D309 and M374. Position 437 (C437) interacts with heme.

It belongs to the cytochrome P450 family. It depends on heme as a cofactor.

It is found in the endoplasmic reticulum membrane. The protein resides in the microsome membrane. It carries out the reaction testosterone + 3 reduced [NADPH--hemoprotein reductase] + 3 O2 = 17beta-estradiol + formate + 3 oxidized [NADPH--hemoprotein reductase] + 4 H2O + 4 H(+). The catalysed reaction is androst-4-ene-3,17-dione + 3 reduced [NADPH--hemoprotein reductase] + 3 O2 = estrone + formate + 3 oxidized [NADPH--hemoprotein reductase] + 4 H2O + 4 H(+). It catalyses the reaction androst-4-ene-3,17-dione + reduced [NADPH--hemoprotein reductase] + O2 = 19-hydroxyandrost-4-ene-3,17-dione + oxidized [NADPH--hemoprotein reductase] + H2O + H(+). The enzyme catalyses 19-hydroxyandrost-4-ene-3,17-dione + reduced [NADPH--hemoprotein reductase] + O2 = 19-oxo-androst-4-ene-3,17-dione + oxidized [NADPH--hemoprotein reductase] + 2 H2O + H(+). It carries out the reaction 19-oxo-androst-4-ene-3,17-dione + reduced [NADPH--hemoprotein reductase] + O2 = estrone + formate + oxidized [NADPH--hemoprotein reductase] + H2O + 2 H(+). The catalysed reaction is estrone + reduced [NADPH--hemoprotein reductase] + O2 = 2-hydroxyestrone + oxidized [NADPH--hemoprotein reductase] + H2O + H(+). It catalyses the reaction 17beta-hydroxy-5alpha-androstan-3-one + reduced [NADPH--hemoprotein reductase] + O2 = 17beta,19-dihydroxy-3-oxo-5alpha-androstanone + oxidized [NADPH--hemoprotein reductase] + H2O + H(+). The enzyme catalyses 17beta,19-dihydroxy-3-oxo-5alpha-androstanone + reduced [NADPH--hemoprotein reductase] + O2 = 17beta-hydroxy-3,19-dioxo-5alpha-androstanone + oxidized [NADPH--hemoprotein reductase] + 2 H2O + H(+). It carries out the reaction 17beta-hydroxy-3,19-dioxo-5alpha-androstanone + reduced [NADPH--hemoprotein reductase] + O2 = 17beta-hydroxy-3-oxo-19-nor-5alpha-androst-1-ene + formate + oxidized [NADPH--hemoprotein reductase] + H2O + 2 H(+). Its pathway is steroid hormone biosynthesis. Its function is as follows. A cytochrome P450 monooxygenase that catalyzes the conversion of C19 androgens, androst-4-ene-3,17-dione (androstenedione) and testosterone to the C18 estrogens, estrone and estradiol, respectively. Catalyzes three successive oxidations of C19 androgens: two conventional oxidations at C19 yielding 19-hydroxy and 19-oxo/19-aldehyde derivatives, followed by a third oxidative aromatization step that involves C1-beta hydrogen abstraction combined with cleavage of the C10-C19 bond to yield a phenolic A ring and formic acid. Alternatively, the third oxidative reaction yields a 19-norsteroid and formic acid. Converts dihydrotestosterone to delta1,10-dehydro 19-nordihydrotestosterone and may play a role in homeostasis of this potent androgen. Also displays 2-hydroxylase activity toward estrone. Mechanistically, uses molecular oxygen inserting one oxygen atom into a substrate, and reducing the second into a water molecule, with two electrons provided by NADPH via cytochrome P450 reductase (CPR; NADPH-ferrihemoprotein reductase). In Leucopleurus acutus (Atlantic white-sided dolphin), this protein is Aromatase (CYP19A1).